A 720-amino-acid chain; its full sequence is Probable GTPase-activating protein GYL1 (720 aa).

Methionine 1 carries the post-translational modification N-acetylmethionine. Residues 1–52 (MNSNEDIHEERIEVPRTPHQTQPEKDSDRIALRDEISVPEGDEKAYSDEKVE) are compositionally biased toward basic and acidic residues. The disordered stretch occupies residues 1-132 (MNSNEDIHEE…TSPPLPPRAD (132 aa)). The residue at position 17 (threonine 17) is a Phosphothreonine. Serine 37 is subject to Phosphoserine. The span at 54 to 66 (ATTNASSNFGSNE) shows a compositional bias: polar residues. The residue at position 73 (serine 73) is a Phosphoserine. Residues 95 to 108 (SKTILPSDDLSQQL) are compositionally biased toward polar residues. A compositionally biased stretch (basic and acidic residues) spans 111–120 (EESKVEEALK). The residue at position 139 (serine 139) is a Phosphoserine. Disordered regions lie at residues 144–164 (SLPPVLAGNKNDQAPLDRPQL) and 179–210 (APHGNATPSKSPTSAVGNSSSSTPPTLPPRRI). Over residues 184–196 (ATPSKSPTSAVGN) the composition is skewed to polar residues. The Rab-GAP TBC domain maps to 297 to 477 (GIPAAYRLVV…RIGDMVFLEG (181 aa)). A Glycyl lysine isopeptide (Lys-Gly) (interchain with G-Cter in SUMO) cross-link involves residue lysine 498. Residues 572–696 (QYKSITEKNL…EIKTANKNGT (125 aa)) adopt a coiled-coil conformation.

This sequence belongs to the GYP5 family. Interacts with GYP5 and RVS167. Is part of SEC4-containing complexes.

It is found in the cytoplasm. It localises to the bud. The protein localises to the bud neck. Probable GTPase-activating protein which stimulates the GTP hydrolysis rate by GYP5 of YPT1 and SEC4. Involved in ER to Golgi trafficking and polarized exocytosis. The sequence is that of Probable GTPase-activating protein GYL1 (GYL1) from Saccharomyces cerevisiae (strain ATCC 204508 / S288c) (Baker's yeast).